Reading from the N-terminus, the 101-residue chain is DET1- and DDB1-associated protein 1 (101 aa).

The tract at residues N67–T101 is disordered.

The protein belongs to the DDA1 family. In terms of assembly, component of numerous DCX (DDB1-CUL4-X-box) E3 ubiquitin-protein ligase complexes which consist of a core of DDB1, cullin-4 (CUL4A or CUL4B), DDA1 and RBX1.

It participates in protein modification; protein ubiquitination. In terms of biological role, functions as a component of numerous distinct DCX (DDB1-CUL4-X-box) E3 ubiquitin-protein ligase complexes which mediate the ubiquitination and subsequent proteasomal degradation of target proteins. In the DCX complexes, acts as a scaffolding subunit required to stabilize the complex. This chain is DET1- and DDB1-associated protein 1, found in Xenopus laevis (African clawed frog).